We begin with the raw amino-acid sequence, 214 residues long: ATP-dependent Clp protease proteolytic subunit 3 (214 aa).

The Nucleophile role is filled by Ser106. His131 is an active-site residue.

The protein belongs to the peptidase S14 family. In terms of assembly, fourteen ClpP subunits assemble into 2 heptameric rings which stack back to back to give a disk-like structure with a central cavity, resembling the structure of eukaryotic proteasomes.

Its subcellular location is the cytoplasm. The catalysed reaction is Hydrolysis of proteins to small peptides in the presence of ATP and magnesium. alpha-casein is the usual test substrate. In the absence of ATP, only oligopeptides shorter than five residues are hydrolyzed (such as succinyl-Leu-Tyr-|-NHMec, and Leu-Tyr-Leu-|-Tyr-Trp, in which cleavage of the -Tyr-|-Leu- and -Tyr-|-Trp bonds also occurs).. Its function is as follows. Cleaves peptides in various proteins in a process that requires ATP hydrolysis. Has a chymotrypsin-like activity. Plays a major role in the degradation of misfolded proteins. In Trichormus variabilis (strain ATCC 29413 / PCC 7937) (Anabaena variabilis), this protein is ATP-dependent Clp protease proteolytic subunit 3.